Reading from the N-terminus, the 359-residue chain is 3-dehydroquinate synthase (359 aa).

NAD(+)-binding positions include 71-76 (DGEQYK), 105-109 (GVIGD), 129-130 (TT), Lys142, Lys151, and 169-172 (CLST). The Zn(2+) site is built by Glu184, His247, and His264.

Belongs to the sugar phosphate cyclases superfamily. Dehydroquinate synthase family. Requires Co(2+) as cofactor. Zn(2+) is required as a cofactor. NAD(+) serves as cofactor.

It is found in the cytoplasm. It carries out the reaction 7-phospho-2-dehydro-3-deoxy-D-arabino-heptonate = 3-dehydroquinate + phosphate. It functions in the pathway metabolic intermediate biosynthesis; chorismate biosynthesis; chorismate from D-erythrose 4-phosphate and phosphoenolpyruvate: step 2/7. Its function is as follows. Catalyzes the conversion of 3-deoxy-D-arabino-heptulosonate 7-phosphate (DAHP) to dehydroquinate (DHQ). The protein is 3-dehydroquinate synthase of Shewanella pealeana (strain ATCC 700345 / ANG-SQ1).